The chain runs to 364 residues: Polygalacturonase (364 aa).

Residues 1 to 21 (MVAYALTSMLLSAGALVAAAP) form the signal peptide. Residues 22–27 (SGLDAR) constitute a propeptide that is removed on maturation. Cysteines 30 and 45 form a disulfide. PbH1 repeat units lie at residues 158–188 (VTGL…DIGS), 189–210 (SSGI…AINS), 211–231 (GSDI…SIGS), 240–261 (VKGV…RIKT), 269–291 (VSDI…VIEQ), and 303–348 (TTGV…SITG). D203 serves as the catalytic Proton donor. Cysteines 205 and 221 form a disulfide. H225 is a catalytic residue. Residue N276 is glycosylated (N-linked (GlcNAc...) asparagine). Cysteines 331 and 336 form a disulfide. N340 is a glycosylation site (N-linked (GlcNAc...) asparagine). C355 and C364 are oxidised to a cystine.

The protein belongs to the glycosyl hydrolase 28 family.

Its subcellular location is the secreted. The enzyme catalyses (1,4-alpha-D-galacturonosyl)n+m + H2O = (1,4-alpha-D-galacturonosyl)n + (1,4-alpha-D-galacturonosyl)m.. In terms of biological role, involved in maceration and soft-rotting of plant tissue. Hydrolyzes the 1,4-alpha glycosidic bonds of de-esterified pectate in the smooth region of the plant cell wall. This is Polygalacturonase (PGN1) from Cochliobolus carbonum (Maize leaf spot fungus).